Consider the following 148-residue polypeptide: Large ribosomal subunit protein uL15 (148 aa).

Residues 1-50 are disordered; sequence MNLSNLKPAEGSTKTRKRIGRGPGSGLGGTSTRGHKGAKSRSGYSKKIGF. The segment covering 21 to 31 has biased composition (gly residues); sequence RGPGSGLGGTS.

This sequence belongs to the universal ribosomal protein uL15 family. Part of the 50S ribosomal subunit.

In terms of biological role, binds to the 23S rRNA. The sequence is that of Large ribosomal subunit protein uL15 from Bacteroides fragilis (strain ATCC 25285 / DSM 2151 / CCUG 4856 / JCM 11019 / LMG 10263 / NCTC 9343 / Onslow / VPI 2553 / EN-2).